Here is a 415-residue protein sequence, read N- to C-terminus: Protein-lysine N-trimethyltransferase SMYD5 (415 aa).

The 332-residue stretch at 20-351 folds into the SET domain; it reads NCVDVRFINN…PGEEICISYL (332 aa). The MYND-type zinc-finger motif lies at 95–135; the sequence is PHPELCKVRPDRHQACPQCQVMYCSSECRQAAMDQYHKILC. Tyrosine 350 is an S-adenosyl-L-methionine binding site. Residues 388–415 are disordered; that stretch reads DMTSEDEEEVEGEGETEGEDMEDEMTDV.

It belongs to the class V-like SAM-binding methyltransferase superfamily. Expressed at high levels in the ovary and at lower levels in the fin, testis and brain.

The protein localises to the cytoplasm. It catalyses the reaction L-lysyl-[protein] + 3 S-adenosyl-L-methionine = N(6),N(6),N(6)-trimethyl-L-lysyl-[protein] + 3 S-adenosyl-L-homocysteine + 3 H(+). It carries out the reaction L-lysyl(20)-[histone H4] + 3 S-adenosyl-L-methionine = N(6),N(6),N(6)-trimethyl-L-lysyl(20)-[histone H4] + 3 S-adenosyl-L-homocysteine + 3 H(+). The catalysed reaction is L-lysyl(36)-[histone H3] + 3 S-adenosyl-L-methionine = N(6),N(6),N(6)-trimethyl-L-lysyl(36)-[histone H3] + 3 S-adenosyl-L-homocysteine + 3 H(+). Functionally, protein-lysine N-trimethyltransferase that specifically catalyzes trimethylation of 'Lys-22' of the RPL40/eL40 subunit of the 60S ribosome, thereby promoting translation elongation and protein synthesis. May also act as a histone methyltransferase in the context of histone octamers, but not on nucleosome substrates: trimethylates 'Lys-36' of histone H3 and 'Lys-20' of histone H4 to form H3K36me3 and H4K20me3, respectively. The histone methyltransferase activity, which is independent of its SET domain, is however unsure in vivo. Plays a crucial role in hematopoiesis during embryogenesis by negatively regulating expression of genes related to both primitive and definitive hematopoiesis. This Danio rerio (Zebrafish) protein is Protein-lysine N-trimethyltransferase SMYD5.